We begin with the raw amino-acid sequence, 936 residues long: MAESINSFDSKSTLQVGEKSYDYFALDAVPGMEKLPYSLKVLGENLLRNEDGKNITREHIEAIANWDPSAEPNFEIQFTPARVIMQDFTGVACIVDLATIRDAVVALGGDADDVNPLNPAEMVIDHSVIIEAFGDSDALEKNVEIEYQRNDERYKFLRWGTGAFENFRVVPPGTGIVHQVNIEYLARSVFDNNGLAYPDTCVGTDSHTTMENGLGILGWGVGGIEAEAAMLGQPISMLIPRVVGFKLTGEIPTGVTATDVVLTITDMLRQHGVVGKFVEFYGKGVGELPLANRATIGNMSPEFGSTAAMFPIDEETVKYLELTGRDQETLERVEAYAKAQGMWLDPEKEVEYSEYLELDLSTVVPSIAGPKRPQDRIELNDSKAQFRKDLHNYVEADASAVTPDFDAEGPATENTSAQTAGTPASAADAKGNIPSAAAGAEGRPSNPVTVNYNGEDIELDHGMVAIASITSCTNTSNPSVMVGAGLLARNAAAKGLKSAPWVKTSMAPGSQVVNGYYEKAGLWKDLEAMGFYLVGYGCTTCIGNSGPLPEEISAGINEGDLAATAVLSGNRNFEGRINPDVKMNYLASPILVIAYAIAGTMDFDFETQPLGQDQDGNDVFLKDIWPSTEDIEEVIASSITKDLYAEDYANVFEGDERWRSLDVPSGKTFDWDPKSTYIRKAPYFDGMSKEPEAVNDVKGARVLALLGDSVTTDHISPASTIKPGTPAAQYLDANGVERKDYNSLGARRGNHEVMVRGTFANIRLQNQLLDGVSGGYTRDFTQEGGPQSFIYDAAMNYQKENTPLVVLGGKEYGTGSSRDWAAKGTLLLGVKAVIAESFERIHRSNLIGMGVVPLQFPEGESWKSLGIEGTETFDIEGIEELNNGSTPKTVKVTATKENGEKIEFDAVTRIDTPGEADYYRNGGILQFVLRNMMSGK.

Residues 401–449 (VTPDFDAEGPATENTSAQTAGTPASAADAKGNIPSAAAGAEGRPSNPVT) form a disordered region. Residues 412 to 422 (TENTSAQTAGT) show a composition bias toward polar residues. Residues Cys-472, Cys-538, and Cys-541 each contribute to the [4Fe-4S] cluster site.

The protein belongs to the aconitase/IPM isomerase family. Monomer. Requires [4Fe-4S] cluster as cofactor.

It carries out the reaction citrate = D-threo-isocitrate. It catalyses the reaction (2S,3R)-3-hydroxybutane-1,2,3-tricarboxylate = 2-methyl-cis-aconitate + H2O. It participates in carbohydrate metabolism; tricarboxylic acid cycle; isocitrate from oxaloacetate: step 2/2. It functions in the pathway organic acid metabolism; propanoate degradation. In terms of biological role, involved in the catabolism of short chain fatty acids (SCFA) via the tricarboxylic acid (TCA)(acetyl degradation route) and probably via the 2-methylcitrate cycle I (propionate degradation route). Catalyzes the reversible isomerization of citrate to isocitrate via cis-aconitate. Could catalyze the hydration of 2-methyl-cis-aconitate to yield (2R,3S)-2-methylisocitrate. The apo form of AcnA functions as a RNA-binding regulatory protein. The chain is Aconitate hydratase A (acn) from Corynebacterium jeikeium (strain K411).